The primary structure comprises 254 residues: Thiamine thiazole synthase (254 aa).

NAD(+) is bound by residues serine 36, 55-56, glycine 63, valine 127, and 154-156; these read EK and HVD. Fe cation is bound by residues aspartate 156 and histidine 171. Methionine 219 contacts NAD(+). Arginine 229 lines the glycine pocket.

This sequence belongs to the THI4 family. Homooctamer; tetramer of dimers. It depends on Fe(2+) as a cofactor.

It catalyses the reaction hydrogen sulfide + glycine + NAD(+) = ADP-5-ethyl-4-methylthiazole-2-carboxylate + nicotinamide + 3 H2O + H(+). The protein operates within cofactor biosynthesis; thiamine diphosphate biosynthesis. In terms of biological role, involved in the biosynthesis of the thiazole moiety of thiamine. Catalyzes the conversion of NAD and glycine to adenosine diphosphate 5-(2-hydroxyethyl)-4-methylthiazole-2-carboxylate (ADT), an adenylated thiazole intermediate, using free sulfide as a source of sulfur. This is Thiamine thiazole synthase from Methanoculleus marisnigri (strain ATCC 35101 / DSM 1498 / JR1).